We begin with the raw amino-acid sequence, 649 residues long: Leucine-rich repeat transmembrane protein FLRT3 (649 aa).

The first 28 residues, 1–28 (MISPAWSIFLIGTKIGLFLQVAPLSVMA), serve as a signal peptide directing secretion. Residues 29 to 58 (KSCPSVCRCDAGFIYCNDRFLTSIPTGIPE) enclose the LRRNT domain. The Extracellular segment spans residues 29-528 (KSCPSVCRCD…KEPYKNPNLP (500 aa)). Disulfide bonds link Cys31–Cys37 and Cys35–Cys44. Positions 38 to 67 (DAGFIYCNDRFLTSIPTGIPEDATTLYLQN) are interaction with ADGRL3. LRR repeat units lie at residues 59 to 80 (DATT…SDLK), 84 to 104 (KVER…NLPK), 105 to 126 (YVKE…SLSK), 129 to 150 (YLEE…EGAF), 155 to 176 (YLRL…LPRT), 177 to 197 (IEEL…SLQG), 200 to 220 (SLKR…GDKV), 226 to 247 (NLTE…LPGT), 248 to 269 (NLRK…AFSY), and 272 to 293 (QLYR…IFDD). N-linked (GlcNAc...) asparagine glycosylation occurs at Asn226. Residues Asn282 and Asn296 are each glycosylated (N-linked (GlcNAc...) asparagine). The region spanning 305 to 357 (NPWYCGCKMKWVRDWLQSLPVKVNVRGLMCQAPEKVRGMAIKDLNAELFDCKD) is the LRRCT domain. A disulfide bridge links Cys309 with Cys334. A disordered region spans residues 385 to 407 (VTKQPDIKNPKLTKDHQTTGSPS). A compositionally biased stretch (basic and acidic residues) spans 389–401 (PDIKNPKLTKDHQ). In terms of domain architecture, Fibronectin type-III spans 409-504 (KTITITVKSV…VCIETETAPL (96 aa)). Residues 529-549 (LAAIIGGAVALVTIALLALVC) traverse the membrane as a helical segment. The Cytoplasmic portion of the chain corresponds to 550–649 (WYVHRNGSLF…GIPDSDHSHS (100 aa)). The segment at 622-649 (LYKNNHSESSSNRSYRDSGIPDSDHSHS) is disordered.

Monomer and homodimer. Self-associates (via leucine-rich repeats), giving rise to homooligomers. Interacts with FGFR1. Interacts (via extracellular domain) with ADGRL1/LPHN1 and LPHN2 (via olfactomedin-like domain). Interacts (via extracellular domain) with ADGRL3 (via olfactomedin-like domain); the interaction is direct. Interacts (via extracellular domain) with UNC5B and UNC5D (via extracellular domain); the interaction is direct. Identified in complexes composed of FLRT3, ADGRL3 and UNC5B, respectively FLRT3, ADGRL3 and UNC5D. May also interact (via extracellular domain) with UNC5A and UNC5C. Interacts (via cytoplasmic domain) with ROBO1. In terms of processing, N-glycosylated. Post-translationally, proteolytic cleavage in the juxtamembrane region gives rise to a soluble ectodomain. Cleavage is probably effected by a metalloprotease.

It is found in the cell membrane. It localises to the presynaptic cell membrane. The protein localises to the endoplasmic reticulum membrane. Its subcellular location is the cell junction. The protein resides in the focal adhesion. It is found in the secreted. It localises to the cell projection. The protein localises to the axon. Its subcellular location is the growth cone membrane. Its function is as follows. Functions in cell-cell adhesion, cell migration and axon guidance, exerting an attractive or repulsive role depending on its interaction partners. Plays a role in the spatial organization of brain neurons. Plays a role in vascular development in the retina. Plays a role in cell-cell adhesion via its interaction with ADGRL3 and probably also other latrophilins that are expressed at the surface of adjacent cells. Interaction with the intracellular domain of ROBO1 mediates axon attraction towards cells expressing NTN1. Mediates axon growth cone collapse and plays a repulsive role in neuron guidance via its interaction with UNC5B, and possibly also other UNC-5 family members. Promotes neurite outgrowth (in vitro). Mediates cell-cell contacts that promote an increase both in neurite number and in neurite length. Plays a role in the regulation of the density of glutamaergic synapses. Plays a role in fibroblast growth factor-mediated signaling cascades. Required for normal morphogenesis during embryonic development, but not for normal embryonic patterning. Required for normal ventral closure, headfold fusion and definitive endoderm migration during embryonic development. Required for the formation of a normal basement membrane and the maintenance of a normal anterior visceral endoderm during embryonic development. The chain is Leucine-rich repeat transmembrane protein FLRT3 (FLRT3) from Pongo abelii (Sumatran orangutan).